A 154-amino-acid polypeptide reads, in one-letter code: Ribonuclease H (154 aa).

Residues 5-147 form the RNase H type-1 domain; sequence GKSRVAIYTD…ADMLARGEVE (143 aa). Residues D14, E53, D75, and D139 each coordinate Mg(2+).

This sequence belongs to the RNase H family. As to quaternary structure, monomer. Requires Mg(2+) as cofactor.

It is found in the cytoplasm. The enzyme catalyses Endonucleolytic cleavage to 5'-phosphomonoester.. Endonuclease that specifically degrades the RNA of RNA-DNA hybrids. The sequence is that of Ribonuclease H from Anaplasma marginale (strain St. Maries).